The following is a 133-amino-acid chain: Small ribosomal subunit protein uS8 (133 aa).

The protein belongs to the universal ribosomal protein uS8 family. As to quaternary structure, part of the 30S ribosomal subunit. Contacts proteins S5 and S12.

One of the primary rRNA binding proteins, it binds directly to 16S rRNA central domain where it helps coordinate assembly of the platform of the 30S subunit. The chain is Small ribosomal subunit protein uS8 from Synechocystis sp. (strain ATCC 27184 / PCC 6803 / Kazusa).